We begin with the raw amino-acid sequence, 418 residues long: Probable carboxypeptidase AFLA_000940 (418 aa).

An N-terminal signal peptide occupies residues 1 to 18 (MKATDLFHVTVLVAGALA). N-linked (GlcNAc...) asparagine glycosylation occurs at asparagine 74. Position 147 (aspartate 147) interacts with Zn(2+). Asparagine 168 carries an N-linked (GlcNAc...) asparagine glycan. Glutamate 179 functions as the Proton acceptor in the catalytic mechanism. Glutamate 180 is a Zn(2+) binding site.

This sequence belongs to the peptidase M20A family. Requires Zn(2+) as cofactor.

The protein resides in the secreted. This is Probable carboxypeptidase AFLA_000940 from Aspergillus flavus (strain ATCC 200026 / FGSC A1120 / IAM 13836 / NRRL 3357 / JCM 12722 / SRRC 167).